Consider the following 157-residue polypeptide: 6,7-dimethyl-8-ribityllumazine synthase (157 aa).

5-amino-6-(D-ribitylamino)uracil-binding positions include Phe-22, 56–58 (AFE), and 81–83 (VLI). 86–87 (ET) serves as a coordination point for (2S)-2-hydroxy-3-oxobutyl phosphate. The Proton donor role is filled by His-89. 5-amino-6-(D-ribitylamino)uracil is bound at residue Phe-114. Arg-128 contacts (2S)-2-hydroxy-3-oxobutyl phosphate.

It belongs to the DMRL synthase family.

The enzyme catalyses (2S)-2-hydroxy-3-oxobutyl phosphate + 5-amino-6-(D-ribitylamino)uracil = 6,7-dimethyl-8-(1-D-ribityl)lumazine + phosphate + 2 H2O + H(+). Its pathway is cofactor biosynthesis; riboflavin biosynthesis; riboflavin from 2-hydroxy-3-oxobutyl phosphate and 5-amino-6-(D-ribitylamino)uracil: step 1/2. Functionally, catalyzes the formation of 6,7-dimethyl-8-ribityllumazine by condensation of 5-amino-6-(D-ribitylamino)uracil with 3,4-dihydroxy-2-butanone 4-phosphate. This is the penultimate step in the biosynthesis of riboflavin. This is 6,7-dimethyl-8-ribityllumazine synthase from Chlamydia trachomatis serovar L2 (strain ATCC VR-902B / DSM 19102 / 434/Bu).